The primary structure comprises 395 residues: Succinyl-diaminopimelate desuccinylase (395 aa).

His74 contacts Zn(2+). Residue Asp76 is part of the active site. Asp107 provides a ligand contact to Zn(2+). Catalysis depends on Glu141, which acts as the Proton acceptor. Glu142, Glu170, and His368 together coordinate Zn(2+).

The protein belongs to the peptidase M20A family. DapE subfamily. In terms of assembly, homodimer. Requires Zn(2+) as cofactor. It depends on Co(2+) as a cofactor.

It catalyses the reaction N-succinyl-(2S,6S)-2,6-diaminopimelate + H2O = (2S,6S)-2,6-diaminopimelate + succinate. The protein operates within amino-acid biosynthesis; L-lysine biosynthesis via DAP pathway; LL-2,6-diaminopimelate from (S)-tetrahydrodipicolinate (succinylase route): step 3/3. Its function is as follows. Catalyzes the hydrolysis of N-succinyl-L,L-diaminopimelic acid (SDAP), forming succinate and LL-2,6-diaminopimelate (DAP), an intermediate involved in the bacterial biosynthesis of lysine and meso-diaminopimelic acid, an essential component of bacterial cell walls. This Brucella melitensis biotype 1 (strain ATCC 23456 / CCUG 17765 / NCTC 10094 / 16M) protein is Succinyl-diaminopimelate desuccinylase.